The sequence spans 58 residues: Ribosome modulation factor (58 aa).

Over residues 1–14 (MKRQKRDKLTRAHS) the composition is skewed to basic residues. Positions 1–25 (MKRQKRDKLTRAHSKGYQAGISGRS) are disordered.

Belongs to the ribosome modulation factor family.

It localises to the cytoplasm. In terms of biological role, during stationary phase, converts 70S ribosomes to an inactive dimeric form (100S ribosomes). The polypeptide is Ribosome modulation factor (Alteromonas naphthalenivorans).